An 800-amino-acid polypeptide reads, in one-letter code: DNA topoisomerase 4 subunit A (800 aa).

A Topo IIA-type catalytic domain is found at 31-495; sequence LPDVRDGLKP…EIEEIKIDKE (465 aa). The active-site O-(5'-phospho-DNA)-tyrosine intermediate is the Tyr-119.

It belongs to the type II topoisomerase GyrA/ParC subunit family. ParC type 2 subfamily. In terms of assembly, heterotetramer composed of ParC and ParE.

It localises to the cell membrane. It carries out the reaction ATP-dependent breakage, passage and rejoining of double-stranded DNA.. Topoisomerase IV is essential for chromosome segregation. It relaxes supercoiled DNA. Performs the decatenation events required during the replication of a circular DNA molecule. The polypeptide is DNA topoisomerase 4 subunit A (Staphylococcus aureus (strain MRSA252)).